Here is an 829-residue protein sequence, read N- to C-terminus: Leucine--tRNA ligase (829 aa).

The short motif at 40–50 (PYPSGNIHMGH) is the 'HIGH' region element. The 'KMSKS' region signature appears at 581 to 585 (KMSKS). Lysine 584 lines the ATP pocket.

Belongs to the class-I aminoacyl-tRNA synthetase family.

It is found in the cytoplasm. The catalysed reaction is tRNA(Leu) + L-leucine + ATP = L-leucyl-tRNA(Leu) + AMP + diphosphate. The sequence is that of Leucine--tRNA ligase from Oleidesulfovibrio alaskensis (strain ATCC BAA-1058 / DSM 17464 / G20) (Desulfovibrio alaskensis).